The sequence spans 422 residues: Inhibitor of growth protein 1 (422 aa).

The segment at 261–349 (ELGDTAGNSG…EASPADLPID (89 aa)) is disordered. A Glycyl lysine isopeptide (Lys-Gly) (interchain with G-Cter in SUMO2) cross-link involves residue Lys-278. Positions 297–314 (RNNENRENASSNHDHDDG) are enriched in basic and acidic residues. The segment covering 322-334 (KKAKTSKKKKRSK) has biased composition (basic residues). The PHD-type zinc finger occupies 353 to 402 (PTYCLCNQVSYGEMIGCDNDECPIEWFHFSCVGLNHKPKGKWYCPKCRGE). Positions 356, 358, 369, 374, 380, 383, 396, and 399 each coordinate Zn(2+). Residues 405–422 (KTMDKALEKSKKERAYNR) form a PBR region.

This sequence belongs to the ING family. Interacts with H3K4me3 and to a lesser extent with H3K4me2. Interacts with TP53. Isoform 2 interacts with RSL1D1. As to expression, isoform 2 was expressed in all normal tissues and cells examined, as well as in all breast cancer and melanoma cell lines examined. Isoform 3 was expressed in testis, liver, and kidney, weakly expressed in colon and brain and not expressed in breast and cultured melanocytes. Isoform 4 was highly expressed in testis and weakly expressed in brain, but not expressed in breast, colon, kidney, melanocytes, breast cancer or melanoma cell lines.

It is found in the nucleus. Its function is as follows. Cooperates with p53/TP53 in the negative regulatory pathway of cell growth by modulating p53-dependent transcriptional activation. Implicated as a tumor suppressor gene. In Homo sapiens (Human), this protein is Inhibitor of growth protein 1 (ING1).